The chain runs to 312 residues: 2,3-dihydroxyphenylpropionate/2,3-dihydroxicinnamic acid 1,2-dioxygenase 1 (312 aa).

The active-site Proton donor is histidine 115. Histidine 179 functions as the Proton acceptor in the catalytic mechanism.

The protein belongs to the LigB/MhpB extradiol dioxygenase family. In terms of assembly, homotetramer. Requires Fe(2+) as cofactor.

It carries out the reaction 3-(2,3-dihydroxyphenyl)propanoate + O2 = (2Z,4E)-2-hydroxy-6-oxonona-2,4-dienedioate + H(+). It catalyses the reaction (2E)-3-(2,3-dihydroxyphenyl)prop-2-enoate + O2 = (2Z,4E,7E)-2-hydroxy-6-oxonona-2,4,7-trienedioate + H(+). It functions in the pathway aromatic compound metabolism; 3-phenylpropanoate degradation. Its function is as follows. Catalyzes the non-heme iron(II)-dependent oxidative cleavage of 2,3-dihydroxyphenylpropionic acid and 2,3-dihydroxicinnamic acid into 2-hydroxy-6-ketononadienedioate and 2-hydroxy-6-ketononatrienedioate, respectively. This Dechloromonas aromatica (strain RCB) protein is 2,3-dihydroxyphenylpropionate/2,3-dihydroxicinnamic acid 1,2-dioxygenase 1.